Here is a 256-residue protein sequence, read N- to C-terminus: uncharacterized protein (256 aa).

The signal sequence occupies residues 1–24; that stretch reads MIKRVNKLVLGISLLFLVISIAAG. A lipid anchor (N-palmitoyl cysteine) is attached at Cys25. A lipid anchor (S-diacylglycerol cysteine) is attached at Cys25.

It belongs to the staphylococcal tandem lipoprotein family.

The protein localises to the cell membrane. This is an uncharacterized protein from Staphylococcus aureus.